The following is an 85-amino-acid chain: ATP synthase subunit c (85 aa).

Transmembrane regions (helical) follow at residues 10–30 (IAVG…FALL) and 53–73 (FIIA…ALLF).

The protein belongs to the ATPase C chain family. In terms of assembly, F-type ATPases have 2 components, F(1) - the catalytic core - and F(0) - the membrane proton channel. F(1) has five subunits: alpha(3), beta(3), gamma(1), delta(1), epsilon(1). F(0) has three main subunits: a(1), b(2) and c(10-14). The alpha and beta chains form an alternating ring which encloses part of the gamma chain. F(1) is attached to F(0) by a central stalk formed by the gamma and epsilon chains, while a peripheral stalk is formed by the delta and b chains.

The protein resides in the cell inner membrane. In terms of biological role, f(1)F(0) ATP synthase produces ATP from ADP in the presence of a proton or sodium gradient. F-type ATPases consist of two structural domains, F(1) containing the extramembraneous catalytic core and F(0) containing the membrane proton channel, linked together by a central stalk and a peripheral stalk. During catalysis, ATP synthesis in the catalytic domain of F(1) is coupled via a rotary mechanism of the central stalk subunits to proton translocation. Functionally, key component of the F(0) channel; it plays a direct role in translocation across the membrane. A homomeric c-ring of between 10-14 subunits forms the central stalk rotor element with the F(1) delta and epsilon subunits. This Aliivibrio fischeri (strain ATCC 700601 / ES114) (Vibrio fischeri) protein is ATP synthase subunit c.